Here is a 668-residue protein sequence, read N- to C-terminus: MGGGVLKQQFVLHAPFLPCGDQPEAIRRLSQGITDGVPAQVLLGTTGSGKTFTMANVIANVNVPTLVLAHNKTLAAQLYQEFKAFFPENAVEYFISYYDYYQPEAYIARSDTYIEKSLLINDEIDKLRLSATRSILERRDTLIVSSISCIYGIGSPDNYSSMALTLEVGKEYPRSQLSSQLVRMHYQASSTPQRSAFRERGSVIDIFLAYESDLAVRLEFMNDTLISIEYVDPLTMIPSHTTSSITLYPGSHYVTPEAVREQAIRTIREELEQRMLFFEGRPVEQERLFQRTTHDIEMIKEIGFCKGIENYSRHFTGAAPGEPPTCLLDYFPDDFLLIIDESHQTLPQLRAMYRGDQSRKQSLVEYGFRLPSAFDNRPLTYEEARRYFHRVIYVSATPGDLEIQESRGHIIEQIIRPTGIPDPLPEIRPAKGQIDDLLEEIRQRLRKDQEKILVISVTKKLAEDIAAFLAELGIAATYLHSGIETAERTQILTDLRLGNIDVLIGVNLLREGIDLPEVSLVAILDADKEGFLRSSASLIQFCGRAARNIHGKVICYADRITPSMDHMLKETERRRKIQLDYNQQHKITPQPIIKPILANPITKEAGQEETRLKMQSSKELEASIKTYEEAMYQAAQEFQFDEAAKYRDLMNAAKKQLLFQKGEEENGD.

Residues 31-416 enclose the Helicase ATP-binding domain; sequence QGITDGVPAQ…RGHIIEQIIR (386 aa). Position 44 to 51 (44 to 51) interacts with ATP; that stretch reads GTTGSGKT. The short motif at 97 to 120 is the Beta-hairpin element; the sequence is YYDYYQPEAYIARSDTYIEKSLLI. The 164-residue stretch at 433 to 596 folds into the Helicase C-terminal domain; it reads QIDDLLEEIR…ITPQPIIKPI (164 aa). A UVR domain is found at 621–656; that stretch reads EASIKTYEEAMYQAAQEFQFDEAAKYRDLMNAAKKQ.

The protein belongs to the UvrB family. In terms of assembly, forms a heterotetramer with UvrA during the search for lesions. Interacts with UvrC in an incision complex.

The protein localises to the cytoplasm. Its function is as follows. The UvrABC repair system catalyzes the recognition and processing of DNA lesions. A damage recognition complex composed of 2 UvrA and 2 UvrB subunits scans DNA for abnormalities. Upon binding of the UvrA(2)B(2) complex to a putative damaged site, the DNA wraps around one UvrB monomer. DNA wrap is dependent on ATP binding by UvrB and probably causes local melting of the DNA helix, facilitating insertion of UvrB beta-hairpin between the DNA strands. Then UvrB probes one DNA strand for the presence of a lesion. If a lesion is found the UvrA subunits dissociate and the UvrB-DNA preincision complex is formed. This complex is subsequently bound by UvrC and the second UvrB is released. If no lesion is found, the DNA wraps around the other UvrB subunit that will check the other stand for damage. The protein is UvrABC system protein B of Chlamydia trachomatis serovar D (strain ATCC VR-885 / DSM 19411 / UW-3/Cx).